Reading from the N-terminus, the 427-residue chain is 3-phosphoshikimate 1-carboxyvinyltransferase (427 aa).

Positions 20, 21, and 25 each coordinate 3-phosphoshikimate. Lysine 20 contributes to the phosphoenolpyruvate binding site. Residues glycine 92 and arginine 120 each coordinate phosphoenolpyruvate. Residues serine 166, glutamine 168, aspartate 312, and lysine 339 each coordinate 3-phosphoshikimate. Glutamine 168 serves as a coordination point for phosphoenolpyruvate. Aspartate 312 functions as the Proton acceptor in the catalytic mechanism. 2 residues coordinate phosphoenolpyruvate: arginine 343 and arginine 385.

Belongs to the EPSP synthase family. Monomer.

Its subcellular location is the cytoplasm. The enzyme catalyses 3-phosphoshikimate + phosphoenolpyruvate = 5-O-(1-carboxyvinyl)-3-phosphoshikimate + phosphate. It participates in metabolic intermediate biosynthesis; chorismate biosynthesis; chorismate from D-erythrose 4-phosphate and phosphoenolpyruvate: step 6/7. In terms of biological role, catalyzes the transfer of the enolpyruvyl moiety of phosphoenolpyruvate (PEP) to the 5-hydroxyl of shikimate-3-phosphate (S3P) to produce enolpyruvyl shikimate-3-phosphate and inorganic phosphate. The sequence is that of 3-phosphoshikimate 1-carboxyvinyltransferase from Streptococcus equi subsp. zooepidemicus (strain H70).